The primary structure comprises 721 residues: Catalase-peroxidase 1 (721 aa).

The tryptophyl-tyrosyl-methioninium (Trp-Tyr) (with M-252) cross-link spans 98-226 (WHAAGTYRIA…LAAVMMGLIY (129 aa)). Histidine 99 functions as the Proton acceptor in the catalytic mechanism. The tryptophyl-tyrosyl-methioninium (Tyr-Met) (with W-98) cross-link spans 226 to 252 (YVNPEGVDGQPDPLKTAHDVRVTFARM). Residue histidine 267 participates in heme b binding.

This sequence belongs to the peroxidase family. Peroxidase/catalase subfamily. Homodimer or homotetramer. The cofactor is heme b. Post-translationally, formation of the three residue Trp-Tyr-Met cross-link is important for the catalase, but not the peroxidase activity of the enzyme.

The enzyme catalyses H2O2 + AH2 = A + 2 H2O. It carries out the reaction 2 H2O2 = O2 + 2 H2O. Functionally, bifunctional enzyme with both catalase and broad-spectrum peroxidase activity. The polypeptide is Catalase-peroxidase 1 (Vibrio parahaemolyticus serotype O3:K6 (strain RIMD 2210633)).